The primary structure comprises 243 residues: Carboxy-S-adenosyl-L-methionine synthase (243 aa).

S-adenosyl-L-methionine-binding positions include tyrosine 40, glycine 65–serine 67, aspartate 90–asparagine 91, aspartate 118–isoleucine 119, asparagine 133, and arginine 200.

The protein belongs to the class I-like SAM-binding methyltransferase superfamily. Cx-SAM synthase family. As to quaternary structure, homodimer.

The enzyme catalyses prephenate + S-adenosyl-L-methionine = carboxy-S-adenosyl-L-methionine + 3-phenylpyruvate + H2O. Catalyzes the conversion of S-adenosyl-L-methionine (SAM) to carboxy-S-adenosyl-L-methionine (Cx-SAM). This is Carboxy-S-adenosyl-L-methionine synthase from Shewanella sediminis (strain HAW-EB3).